Consider the following 144-residue polypeptide: Probable low molecular weight protein-tyrosine-phosphatase AmsI (144 aa).

The active-site Nucleophile is the Cys-9. Arg-15 is a catalytic residue. The Proton donor role is filled by Asp-115.

It belongs to the low molecular weight phosphotyrosine protein phosphatase family.

The catalysed reaction is O-phospho-L-tyrosyl-[protein] + H2O = L-tyrosyl-[protein] + phosphate. Its function is as follows. May function as a phosphatase required for amylovoran (an exopolysaccharide that functions as a virulence factor) production. This Erwinia amylovora (Fire blight bacteria) protein is Probable low molecular weight protein-tyrosine-phosphatase AmsI (amsI).